The chain runs to 176 residues: Large ribosomal subunit protein uL6 (176 aa).

Residues 153-170 (PEPYKGKGIRYGDEEVRR) show a composition bias toward basic and acidic residues. The segment at 153-176 (PEPYKGKGIRYGDEEVRRKEAKKK) is disordered.

This sequence belongs to the universal ribosomal protein uL6 family. As to quaternary structure, part of the 50S ribosomal subunit.

Functionally, this protein binds to the 23S rRNA, and is important in its secondary structure. It is located near the subunit interface in the base of the L7/L12 stalk, and near the tRNA binding site of the peptidyltransferase center. The polypeptide is Large ribosomal subunit protein uL6 (Chromohalobacter salexigens (strain ATCC BAA-138 / DSM 3043 / CIP 106854 / NCIMB 13768 / 1H11)).